A 189-amino-acid polypeptide reads, in one-letter code: Large ribosomal subunit protein uL5 (189 aa).

Belongs to the universal ribosomal protein uL5 family. Part of the 50S ribosomal subunit; part of the 5S rRNA/L5/L18/L25 subcomplex. Contacts the 5S rRNA and the P site tRNA. Forms a bridge to the 30S subunit in the 70S ribosome.

Its function is as follows. This is one of the proteins that bind and probably mediate the attachment of the 5S RNA into the large ribosomal subunit, where it forms part of the central protuberance. In the 70S ribosome it contacts protein S13 of the 30S subunit (bridge B1b), connecting the 2 subunits; this bridge is implicated in subunit movement. Contacts the P site tRNA; the 5S rRNA and some of its associated proteins might help stabilize positioning of ribosome-bound tRNAs. The polypeptide is Large ribosomal subunit protein uL5 (Kineococcus radiotolerans (strain ATCC BAA-149 / DSM 14245 / SRS30216)).